The primary structure comprises 1120 residues: Transcription-repair-coupling factor (1120 aa).

The Helicase ATP-binding domain maps to 591-756 (DLSNGMLMDR…MTGLKELSII (166 aa)). Residue 604 to 611 (GDVGFGKT) coordinates ATP. The short motif at 709–712 (DEEQ) is the DEEQ box element. One can recognise a Helicase C-terminal domain in the interval 777-931 (IIRDALLHEH…GFTIASHDMD (155 aa)).

This sequence in the N-terminal section; belongs to the UvrB family. The protein in the C-terminal section; belongs to the helicase family. RecG subfamily.

The protein localises to the cytoplasm. In terms of biological role, couples transcription and DNA repair by recognizing RNA polymerase (RNAP) stalled at DNA lesions. Mediates ATP-dependent release of RNAP and its truncated transcript from the DNA, and recruitment of nucleotide excision repair machinery to the damaged site. This chain is Transcription-repair-coupling factor, found in Rickettsia bellii (strain RML369-C).